Reading from the N-terminus, the 2314-residue chain is A-kinase anchor protein 6 (2314 aa).

Residues 1-12 (MLTMSVTLSPLR) are compositionally biased toward polar residues. 4 disordered regions span residues 1-25 (MLTM…DASP), 285-432 (PSSC…DPPD), 505-613 (SLCR…PCHA), and 736-755 (TDEK…HSAT). Positions 301–311 (SDDHKGEHGED) are enriched in basic and acidic residues. Over residues 319–330 (QLDSTVGMSSLD) the composition is skewed to polar residues. Basic and acidic residues predominate over residues 398-420 (ETQKNERKGSDRKGQVVDLKPEL). Residues 569–592 (SKASSSPPCSHSSESSLGSDSIKS) are compositionally biased toward low complexity. Basic and acidic residues predominate over residues 736 to 753 (TDEKSERPSSSEKNESHS). Spectrin repeat units follow at residues 768–847 (QHQE…QLLE) and 1033–1148 (ILEK…LLDD). At serine 1072 the chain carries Phosphoserine. The interval 1349 to 1401 (CHSGDLSQNSGSESGIVSEGDNEMPTNSDMSLFSMVDGSPSNPETEHPDPQMG) is disordered. Residues 1353–1363 (DLSQNSGSESG) are compositionally biased toward polar residues. A phosphoserine mark is found at serine 1568 and serine 1593. Composition is skewed to basic and acidic residues over residues 1816-1831 (RSGV…DGGG) and 1874-1891 (GENK…HVAD). 3 disordered regions span residues 1816 to 1838 (RSGV…ANPS), 1854 to 1926 (LSEN…KTIS), and 1940 to 2012 (SEDS…SGAR). Positions 1917 to 1926 (NLASNVKTIS) are enriched in polar residues. Residues 1944 to 1958 (SVARKEFCPPNDRHP) show a composition bias toward basic and acidic residues. A PKA-RII subunit binding domain region spans residues 2062–2075 (IIDMASTALKSKSQ). The tract at residues 2166–2286 (EEAGLPGALP…NAKQPKGKVA (121 aa)) is disordered. The segment covering 2215–2226 (GADDAKEGDDVS) has biased composition (basic and acidic residues). The span at 2227–2243 (HTSQGCAESTEPTTPSG) shows a compositional bias: polar residues.

As to quaternary structure, interacts with RII subunit of PKA, phosphatase 2B (calcineurin) and AKAP79. Interacts with SYNPO2.

The protein resides in the sarcoplasmic reticulum. It localises to the nucleus membrane. Its function is as follows. Binds to type II regulatory subunits of protein kinase A and anchors/targets them to the nuclear membrane or sarcoplasmic reticulum. May act as an adapter for assembling multiprotein complexes. This chain is A-kinase anchor protein 6 (Akap6), found in Rattus norvegicus (Rat).